The chain runs to 827 residues: DNA gyrase subunit A (827 aa).

Residues 38–501 (LPDARDGLKP…SYENIDIEDL (464 aa)) form the Topo IIA-type catalytic domain. Tyrosine 126 (O-(5'-phospho-DNA)-tyrosine intermediate) is an active-site residue. Residues 528–534 (QNRGGKG) carry the GyrA-box motif.

Belongs to the type II topoisomerase GyrA/ParC subunit family. As to quaternary structure, heterotetramer, composed of two GyrA and two GyrB chains. In the heterotetramer, GyrA contains the active site tyrosine that forms a transient covalent intermediate with DNA, while GyrB binds cofactors and catalyzes ATP hydrolysis.

Its subcellular location is the cytoplasm. It carries out the reaction ATP-dependent breakage, passage and rejoining of double-stranded DNA.. A type II topoisomerase that negatively supercoils closed circular double-stranded (ds) DNA in an ATP-dependent manner to modulate DNA topology and maintain chromosomes in an underwound state. Negative supercoiling favors strand separation, and DNA replication, transcription, recombination and repair, all of which involve strand separation. Also able to catalyze the interconversion of other topological isomers of dsDNA rings, including catenanes and knotted rings. Type II topoisomerases break and join 2 DNA strands simultaneously in an ATP-dependent manner. The polypeptide is DNA gyrase subunit A (Helicobacter pylori (strain ATCC 700392 / 26695) (Campylobacter pylori)).